The following is a 1170-amino-acid chain: PAN2-PAN3 deadenylation complex catalytic subunit PAN2 (1170 aa).

WD repeat units lie at residues 104 to 144 (ENMK…IIKQ) and 280 to 319 (NISS…HFTD). The interval 319 to 458 (DMAIPIELPE…DPNEIESLKP (140 aa)) is linker. Positions 399 to 459 (RRNQVEDTRN…PNEIESLKPE (61 aa)) are disordered. Residues 443-452 (VDQEPEDPNE) show a composition bias toward acidic residues. A USP domain is found at 459-846 (EAPPLYRNLE…MPAVLLFQIK (388 aa)). Positions 894-1067 (VALDTEFVSL…EDARTALKLY (174 aa)) constitute an Exonuclease domain. The a divalent metal cation site is built by Asp897, Glu899, Asp1006, and Asp1059. A disordered region spans residues 1094-1170 (NFKPPRREDR…PSKASSPLPK (77 aa)). Positions 1098 to 1108 (PRREDREKELQ) are enriched in basic and acidic residues. A compositionally biased stretch (polar residues) spans 1109–1119 (RQSTPPNSTAP).

This sequence belongs to the peptidase C19 family. PAN2 subfamily. Forms a heterotrimer with an asymmetric homodimer of the regulatory subunit PAN3 to form the poly(A)-nuclease (PAN) deadenylation complex. A divalent metal cation is required as a cofactor.

The protein resides in the cytoplasm. It carries out the reaction Exonucleolytic cleavage of poly(A) to 5'-AMP.. Its activity is regulated as follows. Positively regulated by the regulatory subunit PAN3. Catalytic subunit of the poly(A)-nuclease (PAN) deadenylation complex, one of two cytoplasmic mRNA deadenylases involved in mRNA turnover. PAN specifically shortens poly(A) tails of RNA and the activity is stimulated by poly(A)-binding protein PAB1. PAN deadenylation is followed by rapid degradation of the shortened mRNA tails by the CCR4-NOT complex. Deadenylated mRNAs are then degraded by two alternative mechanisms, namely exosome-mediated 3'-5' exonucleolytic degradation, or deadenylation-dependent mRNA decaping and subsequent 5'-3' exonucleolytic degradation by XRN1. May also be involved in post-transcriptional maturation of mRNA poly(A) tails. The polypeptide is PAN2-PAN3 deadenylation complex catalytic subunit PAN2 (Chaetomium thermophilum (strain DSM 1495 / CBS 144.50 / IMI 039719) (Thermochaetoides thermophila)).